We begin with the raw amino-acid sequence, 251 residues long: uncharacterized protein (251 aa).

The signal sequence occupies residues 1–25 (MSAGRLNKKSLGIVMLLSVGLLLAG). Residue cysteine 26 is the site of N-palmitoyl cysteine attachment. Cysteine 26 is lipidated: S-diacylglycerol cysteine. Positions 40–84 (SVYTVKRGDTLYRISRTTGTSVKELARLNGISPPYTIEVGQKLKL) constitute a LysM domain. Positions 93–112 (TRKSTAKSTTKTASVTPSSA) are enriched in low complexity. Positions 93–115 (TRKSTAKSTTKTASVTPSSAVPK) are disordered.

Belongs to the peptidase M23B family.

The protein resides in the cell inner membrane. This is an uncharacterized protein from Escherichia coli (strain K12).